A 219-amino-acid polypeptide reads, in one-letter code: ATP synthase F(0) complex subunit a (219 aa).

A run of 6 helical transmembrane segments spans residues 4–24 (PTYLGIPLIAVALTLPWILFP), 61–81 (WAALLTSLMLFLITLNMLGLL), 90–110 (QLSLNMGLAVPLWLATVIIGM), 124–144 (EGTPVPLIPVLIIIETISLFI), 172–192 (FVLLPLMPTVAILTSIVLFLL), and 194–214 (LLEIAVAMIQAYVFVLLLSLY).

This sequence belongs to the ATPase A chain family. As to quaternary structure, component of the ATP synthase complex composed at least of ATP5F1A/subunit alpha, ATP5F1B/subunit beta, ATP5MC1/subunit c (homooctomer), MT-ATP6/subunit a, MT-ATP8/subunit 8, ATP5ME/subunit e, ATP5MF/subunit f, ATP5MG/subunit g, ATP5MK/subunit k, ATP5MJ/subunit j, ATP5F1C/subunit gamma, ATP5F1D/subunit delta, ATP5F1E/subunit epsilon, ATP5PF/subunit F6, ATP5PB/subunit b, ATP5PD/subunit d, ATP5PO/subunit OSCP. ATP synthase complex consists of a soluble F(1) head domain (subunits alpha(3) and beta(3)) - the catalytic core - and a membrane F(0) domain - the membrane proton channel (subunits c, a, 8, e, f, g, k and j). These two domains are linked by a central stalk (subunits gamma, delta, and epsilon) rotating inside the F1 region and a stationary peripheral stalk (subunits F6, b, d, and OSCP). Interacts with DNAJC30; interaction is direct.

The protein localises to the mitochondrion inner membrane. It catalyses the reaction H(+)(in) = H(+)(out). Functionally, subunit a, of the mitochondrial membrane ATP synthase complex (F(1)F(0) ATP synthase or Complex V) that produces ATP from ADP in the presence of a proton gradient across the membrane which is generated by electron transport complexes of the respiratory chain. ATP synthase complex consist of a soluble F(1) head domain - the catalytic core - and a membrane F(1) domain - the membrane proton channel. These two domains are linked by a central stalk rotating inside the F(1) region and a stationary peripheral stalk. During catalysis, ATP synthesis in the catalytic domain of F(1) is coupled via a rotary mechanism of the central stalk subunits to proton translocation. With the subunit c (ATP5MC1), forms the proton-conducting channel in the F(0) domain, that contains two crucial half-channels (inlet and outlet) that facilitate proton movement from the mitochondrial intermembrane space (IMS) into the matrix. Protons are taken up via the inlet half-channel and released through the outlet half-channel, following a Grotthuss mechanism. The chain is ATP synthase F(0) complex subunit a from Oncorhynchus masou (Cherry salmon).